The sequence spans 467 residues: 2-succinylbenzoate--CoA ligase (467 aa).

Belongs to the ATP-dependent AMP-binding enzyme family. MenE subfamily.

It catalyses the reaction 2-succinylbenzoate + ATP + CoA = 2-succinylbenzoyl-CoA + AMP + diphosphate. It participates in quinol/quinone metabolism; 1,4-dihydroxy-2-naphthoate biosynthesis; 1,4-dihydroxy-2-naphthoate from chorismate: step 5/7. The protein operates within quinol/quinone metabolism; menaquinone biosynthesis. Its function is as follows. Converts 2-succinylbenzoate (OSB) to 2-succinylbenzoyl-CoA (OSB-CoA). This is 2-succinylbenzoate--CoA ligase from Listeria innocua serovar 6a (strain ATCC BAA-680 / CLIP 11262).